The following is a 274-amino-acid chain: tRNA-cytidine(32) 2-sulfurtransferase (274 aa).

A PP-loop motif motif is present at residues 40 to 45; sequence SGGKDS. [4Fe-4S] cluster-binding residues include cysteine 115, cysteine 118, and cysteine 206.

This sequence belongs to the TtcA family. In terms of assembly, homodimer. Mg(2+) serves as cofactor. The cofactor is [4Fe-4S] cluster.

Its subcellular location is the cytoplasm. It carries out the reaction cytidine(32) in tRNA + S-sulfanyl-L-cysteinyl-[cysteine desulfurase] + AH2 + ATP = 2-thiocytidine(32) in tRNA + L-cysteinyl-[cysteine desulfurase] + A + AMP + diphosphate + H(+). The protein operates within tRNA modification. Functionally, catalyzes the ATP-dependent 2-thiolation of cytidine in position 32 of tRNA, to form 2-thiocytidine (s(2)C32). The sulfur atoms are provided by the cysteine/cysteine desulfurase (IscS) system. The protein is tRNA-cytidine(32) 2-sulfurtransferase of Pseudomonas putida (strain ATCC 47054 / DSM 6125 / CFBP 8728 / NCIMB 11950 / KT2440).